The primary structure comprises 153 residues: Ergochrome gene cluster protein CPUR_05425 (153 aa).

The protein operates within pigment biosynthesis. In terms of biological role, part of the ergochrome gene cluster responsible for the typical purple-black color of the ergot sclerotia. The ergochrome gene cluster produces several ergot pigments including the yellow ergochrome secalonic acid and its derivatives, as well as the red anthraquinones endocrocin and clavorubin. The pathway begins with the synthesis of atrochrysone thioester by the polyketide synthase (PKS) CPUR_05437. The atrochrysone carboxyl ACP thioesterase CPUR_05436 then breaks the thioester bond and releases the atrochrysone carboxylic acid from CPUR_05437. The atrochrysone carboxylic acid is then converted to atrochrysone which is further transformed into emodin anthrone. The next step is performed by the anthrone oxygenase CPUR_05434 that catalyzes the oxidation of emodinanthrone to emodin. Emodin is further modified to yield monodictyphenone via several steps involving CPUR_05427, CPUR_05428, CPUR_05429 and CPUR_05430. The short chain dehydrogenase/reductase CPUR_05418 then catalyzes the C-5 ketoreduction to give the xanthone skeleton of the monomeric units. Ergochromes formation requires further dimerization steps of different xanthone units, probably catalyzed by the cytochrome P450 monooxygenase CPUR_05419. CPUR_05425, CPUR_05426 and CPUR_05431 are unique to Claviceps, thus it is likely that they are involved in further modification of xanthone units or in their dimerization. The yellow ergochromes and the red anthraquinone pigments endocrocin and clavorubin are products from the same PKS derived precursors and the latter are likely shunt products in the pathway of xanthone biosynthesis. It is proposed that atrochrysone carboxylic acid released from the PKS CPUR_05437 can also be converted to endocrocin anthrone which is further oxidized into endocrocin by CPUR_05435. Endocrocin could be then modified to clavorubin, possibly by CPUR_05423 and CPUR_05431. Clavorubin is the principal anthraquinone metabolite produced by the cluster with a much higher yield compared to endocrocin. The chain is Ergochrome gene cluster protein CPUR_05425 from Claviceps purpurea (strain 20.1) (Ergot fungus).